The chain runs to 372 residues: Cobalt-precorrin-5B C(1)-methyltransferase (372 aa).

The protein belongs to the CbiD family.

The catalysed reaction is Co-precorrin-5B + S-adenosyl-L-methionine = Co-precorrin-6A + S-adenosyl-L-homocysteine. Its pathway is cofactor biosynthesis; adenosylcobalamin biosynthesis; cob(II)yrinate a,c-diamide from sirohydrochlorin (anaerobic route): step 6/10. In terms of biological role, catalyzes the methylation of C-1 in cobalt-precorrin-5B to form cobalt-precorrin-6A. This Prochlorococcus marinus (strain MIT 9515) protein is Cobalt-precorrin-5B C(1)-methyltransferase.